A 403-amino-acid polypeptide reads, in one-letter code: Arginine deiminase (403 aa).

Catalysis depends on cysteine 388, which acts as the Amidino-cysteine intermediate.

Belongs to the arginine deiminase family.

It localises to the cytoplasm. It carries out the reaction L-arginine + H2O = L-citrulline + NH4(+). It functions in the pathway amino-acid degradation; L-arginine degradation via ADI pathway; carbamoyl phosphate from L-arginine: step 1/2. In Mycoplasma capricolum subsp. capricolum (strain California kid / ATCC 27343 / NCTC 10154), this protein is Arginine deiminase.